Consider the following 431-residue polypeptide: Enolase (431 aa).

A (2R)-2-phosphoglycerate-binding site is contributed by glutamine 166. Glutamate 208 acts as the Proton donor in catalysis. 3 residues coordinate Mg(2+): aspartate 245, glutamate 288, and aspartate 315. Residues lysine 340, arginine 369, serine 370, and lysine 391 each contribute to the (2R)-2-phosphoglycerate site. Lysine 340 (proton acceptor) is an active-site residue.

This sequence belongs to the enolase family. It depends on Mg(2+) as a cofactor.

The protein resides in the cytoplasm. The protein localises to the secreted. It is found in the cell surface. The catalysed reaction is (2R)-2-phosphoglycerate = phosphoenolpyruvate + H2O. The protein operates within carbohydrate degradation; glycolysis; pyruvate from D-glyceraldehyde 3-phosphate: step 4/5. Its function is as follows. Catalyzes the reversible conversion of 2-phosphoglycerate (2-PG) into phosphoenolpyruvate (PEP). It is essential for the degradation of carbohydrates via glycolysis. The chain is Enolase from Clostridium tetani (strain Massachusetts / E88).